We begin with the raw amino-acid sequence, 152 residues long: Large ribosomal subunit protein uL15 (152 aa).

Positions 1 to 66 (MRSNPMTLRL…GFEGGQTPMQ (66 aa)) are disordered. The span at 28–38 (RGIGSGLGKTA) shows a compositional bias: gly residues. The segment covering 39–52 (GRGHKGSFARKGGG) has biased composition (basic residues).

This sequence belongs to the universal ribosomal protein uL15 family. As to quaternary structure, part of the 50S ribosomal subunit.

Binds to the 23S rRNA. This chain is Large ribosomal subunit protein uL15, found in Xanthomonas oryzae pv. oryzae (strain KACC10331 / KXO85).